The sequence spans 89 residues: Acyl-CoA-binding protein (89 aa).

An ACB domain is found at Leu-3–Ser-88. An acyl-CoA contacts are provided by residues Tyr-30 to Lys-34, Lys-56, and Tyr-75.

Belongs to the ACBP family.

In terms of biological role, binds medium- and long-chain acyl-CoA esters with very high affinity and may function as an intracellular carrier of acyl-CoA esters. The sequence is that of Acyl-CoA-binding protein from Gossypium hirsutum (Upland cotton).